A 148-amino-acid polypeptide reads, in one-letter code: Large-conductance mechanosensitive channel (148 aa).

Helical transmembrane passes span A9 to F29 and I79 to I99.

It belongs to the MscL family. As to quaternary structure, homopentamer.

It localises to the cell inner membrane. Channel that opens in response to stretch forces in the membrane lipid bilayer. May participate in the regulation of osmotic pressure changes within the cell. This is Large-conductance mechanosensitive channel from Pseudomonas syringae pv. tomato (strain ATCC BAA-871 / DC3000).